Reading from the N-terminus, the 75-residue chain is UPF0346 protein LJ_1103 (75 aa).

It belongs to the UPF0346 family.

The sequence is that of UPF0346 protein LJ_1103 from Lactobacillus johnsonii (strain CNCM I-12250 / La1 / NCC 533).